The sequence spans 234 residues: Uracil-DNA glycosylase (234 aa).

The active-site Proton acceptor is aspartate 68.

It belongs to the uracil-DNA glycosylase (UDG) superfamily. UNG family.

Its subcellular location is the cytoplasm. It carries out the reaction Hydrolyzes single-stranded DNA or mismatched double-stranded DNA and polynucleotides, releasing free uracil.. In terms of biological role, excises uracil residues from the DNA which can arise as a result of misincorporation of dUMP residues by DNA polymerase or due to deamination of cytosine. This Ruegeria sp. (strain TM1040) (Silicibacter sp.) protein is Uracil-DNA glycosylase.